We begin with the raw amino-acid sequence, 176 residues long: NADH-quinone oxidoreductase subunit 10 (176 aa).

Helical transmembrane passes span 2–22 (SLLEGLALFLLLLSGVLVVTL), 26–46 (IHAALALILNFLVLAGVYVAL), 56–76 (VIVYAGAIVVLFLFVIMLLFA), 91–111 (PLAALLALGVAGILAAGLWGL), and 137–157 (FVLLAVGFLLMAATVVAVALV).

This sequence belongs to the complex I subunit 6 family. In terms of assembly, NDH-1 is composed of 15 different subunits, Nqo1 to Nqo15. The complex has a L-shaped structure, with the hydrophobic arm (subunits Nqo7, Nqo8 and Nqo10 to Nqo14) embedded in the membrane and the hydrophilic peripheral arm (subunits Nqo1 to Nqo6, Nqo9 and Nqo15) protruding into the bacterial cytoplasm. The hydrophilic domain contains all the redox centers.

It localises to the cell inner membrane. The enzyme catalyses a quinone + NADH + 5 H(+)(in) = a quinol + NAD(+) + 4 H(+)(out). Functionally, NDH-1 shuttles electrons from NADH, via FMN and iron-sulfur (Fe-S) centers, to quinones in the respiratory chain. The immediate electron acceptor for the enzyme in this species is menaquinone. Couples the redox reaction to proton translocation (for every two electrons transferred, four hydrogen ions are translocated across the cytoplasmic membrane), and thus conserves the redox energy in a proton gradient required for the synthesis of ATP. This chain is NADH-quinone oxidoreductase subunit 10 (nqo10), found in Thermus thermophilus (strain ATCC 27634 / DSM 579 / HB8).